Here is a 144-residue protein sequence, read N- to C-terminus: 3-dehydroquinate dehydratase (144 aa).

The Proton acceptor role is filled by Y22. Substrate-binding residues include N73, H79, and D86. H99 acts as the Proton donor in catalysis. Residues 100–101 (IS) and R110 contribute to the substrate site.

The protein belongs to the type-II 3-dehydroquinase family. In terms of assembly, homododecamer.

The enzyme catalyses 3-dehydroquinate = 3-dehydroshikimate + H2O. The protein operates within metabolic intermediate biosynthesis; chorismate biosynthesis; chorismate from D-erythrose 4-phosphate and phosphoenolpyruvate: step 3/7. Its function is as follows. Catalyzes a trans-dehydration via an enolate intermediate. The chain is 3-dehydroquinate dehydratase from Mycobacteroides abscessus (strain ATCC 19977 / DSM 44196 / CCUG 20993 / CIP 104536 / JCM 13569 / NCTC 13031 / TMC 1543 / L948) (Mycobacterium abscessus).